Reading from the N-terminus, the 357-residue chain is Probable cinnamyl alcohol dehydrogenase (357 aa).

Residue C47 participates in Zn(2+) binding. Position 49 (S49) interacts with NADP(+). Positions 69, 70, 100, 103, 106, 114, and 163 each coordinate Zn(2+). NADP(+) contacts are provided by residues T167, 188–193 (GLGGVG), 211–216 (SSSDKK), T251, G275, and 298–300 (SFI).

The protein belongs to the zinc-containing alcohol dehydrogenase family. In terms of assembly, homodimer. It depends on Zn(2+) as a cofactor.

It catalyses the reaction (E)-cinnamyl alcohol + NADP(+) = (E)-cinnamaldehyde + NADPH + H(+). It carries out the reaction (E)-coniferol + NADP(+) = (E)-coniferaldehyde + NADPH + H(+). The enzyme catalyses (E)-sinapyl alcohol + NADP(+) = (E)-sinapaldehyde + NADPH + H(+). The catalysed reaction is (E)-4-coumaroyl alcohol + NADP(+) = (E)-4-coumaraldehyde + NADPH + H(+). It catalyses the reaction (E)-caffeyl alcohol + NADP(+) = (E)-caffeyl aldehyde + NADPH + H(+). It functions in the pathway aromatic compound metabolism; phenylpropanoid biosynthesis. Functionally, involved in lignin biosynthesis. Catalyzes the final step specific for the production of lignin monomers. Catalyzes the NADPH-dependent reduction of coniferaldehyde, 5-hydroxyconiferaldehyde, sinapaldehyde, 4-coumaraldehyde and caffeyl aldehyde to their respective alcohols. This chain is Probable cinnamyl alcohol dehydrogenase, found in Pinus taeda (Loblolly pine).